Consider the following 288-residue polypeptide: ATP synthase gamma chain 1 (288 aa).

Belongs to the ATPase gamma chain family. In terms of assembly, F-type ATPases have 2 components, CF(1) - the catalytic core - and CF(0) - the membrane proton channel. CF(1) has five subunits: alpha(3), beta(3), gamma(1), delta(1), epsilon(1). CF(0) has three main subunits: a, b and c.

Its subcellular location is the cell inner membrane. In terms of biological role, produces ATP from ADP in the presence of a proton gradient across the membrane. The gamma chain is believed to be important in regulating ATPase activity and the flow of protons through the CF(0) complex. The chain is ATP synthase gamma chain 1 from Photobacterium profundum (strain SS9).